Consider the following 69-residue polypeptide: MSRKKHESSENNPVWFPTIMFGLMGTGAVWMVLFYISNGALPLPAVGTWNILIAFGIIMAGFAMMSRWK.

2 consecutive transmembrane segments (helical) span residues 14-34 (VWFP…MVLF) and 45-65 (AVGT…FAMM).

This sequence belongs to the CrgA family.

It localises to the cell membrane. Involved in cell division. This Tropheryma whipplei (strain TW08/27) (Whipple's bacillus) protein is Cell division protein CrgA.